The primary structure comprises 380 residues: MAPNIRKSHPLLKMINNSLIDLPAPSNISAWWNFGSLLAVCLATQILTGLLLAMHYTADTSLAFSSVAHTCRNVQYGWLIRNLHANGASFFFICIFLHIGRGLYYGSYLYKETWNTGVILLLTLMATAFVGYVLPWGQMSFWGGTVITNLFSAIPYIGQTLVEWAWGGFSVDNPTLTRFFALHFLLPFVIAGITVTHLMFLHESGSNNPLGISSNSDKIPFHPYYSLKDILGLALMLTPFLTLALFSPNLLGDPENFTPANPLVTPPHIKPEWYFLFAYAILRSIPNKLGGVLALAASVLILLLIPFLHKSKQRTMTFRPLSQALFWLLVANLLILTWVGSQPVEHPFIIIGQMASFSYFTILLSLLPAVGTLENKMLNY.

4 helical membrane-spanning segments follow: residues 34–54 (FGSLLAVCLATQILTGLLLAM), 78–99 (WLIRNLHANGASFFFICIFLHI), 114–134 (WNTGVILLLTLMATAFVGYVL), and 179–199 (FFALHFLLPFVIAGITVTHLM). Heme b contacts are provided by His-84 and His-98. Residues His-183 and His-197 each coordinate heme b. His-202 is an a ubiquinone binding site. Helical transmembrane passes span 227–247 (LKDILGLALMLTPFLTLALFS), 289–309 (LGGVLALAASVLILLLIPFLH), 321–341 (LSQALFWLLVANLLILTWVGS), and 348–368 (FIIIGQMASFSYFTILLSLLP).

The protein belongs to the cytochrome b family. As to quaternary structure, the cytochrome bc1 complex contains 11 subunits: 3 respiratory subunits (MT-CYB, CYC1 and UQCRFS1), 2 core proteins (UQCRC1 and UQCRC2) and 6 low-molecular weight proteins (UQCRH/QCR6, UQCRB/QCR7, UQCRQ/QCR8, UQCR10/QCR9, UQCR11/QCR10 and a cleavage product of UQCRFS1). This cytochrome bc1 complex then forms a dimer. Heme b serves as cofactor.

It localises to the mitochondrion inner membrane. Its function is as follows. Component of the ubiquinol-cytochrome c reductase complex (complex III or cytochrome b-c1 complex) that is part of the mitochondrial respiratory chain. The b-c1 complex mediates electron transfer from ubiquinol to cytochrome c. Contributes to the generation of a proton gradient across the mitochondrial membrane that is then used for ATP synthesis. This Crossoptilon crossoptilon (White-eared pheasant) protein is Cytochrome b (MT-CYB).